Here is a 424-residue protein sequence, read N- to C-terminus: Tubulin-specific chaperone cofactor E-like protein (424 aa).

Phosphoserine occurs at positions 18 and 41. LRR repeat units lie at residues 73–98 (CAHV…IVSN), 99–123 (VPQL…TCAG), 124–147 (SFSG…HTIL), 150–172 (LPDL…PSVC), 173–197 (CHSL…KLGV), 199–224 (FPSL…SLAR), and 226–250 (FPNL…KLNS). An LRRCT domain is found at 262–303 (IPLLQPYTTEERRKLVVARLPSVSKLNGSVVTDGEREDSERF). Positions 334 to 424 (AEVDLRPQSS…DKIFVESKTK (91 aa)) constitute a Ubiquitin-like domain. Residues 350-375 (FNDQVEEVSIRLDQTVAELKRQLKTL) adopt a coiled-coil conformation.

The protein localises to the cytoplasm. Its subcellular location is the cytoskeleton. Functionally, acts as a regulator of tubulin stability. This chain is Tubulin-specific chaperone cofactor E-like protein (Tbcel), found in Rattus norvegicus (Rat).